The primary structure comprises 230 residues: Large ribosomal subunit protein uL1 (230 aa).

It belongs to the universal ribosomal protein uL1 family. As to quaternary structure, part of the 50S ribosomal subunit.

Functionally, binds directly to 23S rRNA. The L1 stalk is quite mobile in the ribosome, and is involved in E site tRNA release. In terms of biological role, protein L1 is also a translational repressor protein, it controls the translation of the L11 operon by binding to its mRNA. The protein is Large ribosomal subunit protein uL1 of Staphylococcus aureus (strain Mu3 / ATCC 700698).